The sequence spans 582 residues: Protein alan shepard (582 aa).

Residues 1 to 12 (MHPRYSPAPPPQ) show a composition bias toward pro residues. Residues 1–73 (MHPRYSPAPP…AAPPTSRSAF (73 aa)) are disordered. Tyrosine 5 carries the phosphotyrosine modification. A compositionally biased stretch (low complexity) spans 13-24 (QQQQMGGPLHQQ). Residues 25–36 (QGGGGGGGGGIR) are compositionally biased toward gly residues. A compositionally biased stretch (polar residues) spans 39 to 57 (SNAQQLPPQIPRSQNYSNG). Over residues 58–72 (SSSSAAAAPPTSRSA) the composition is skewed to low complexity. Phosphotyrosine is present on residues tyrosine 125 and tyrosine 142. The disordered stretch occupies residues 164–225 (PATTTYGQRV…TVQNQNQQGG (62 aa)). The segment covering 178–225 (SPSNTNSSSSSNTGSQSGTLSTSLSNTTNTNTNMGPNGTVQNQNQQGG) has biased composition (low complexity). RRM domains lie at 231–304 (TNLY…MAKQ) and 310–389 (TNLY…FADG). A disordered region spans residues 555-582 (PMTDSEQASTAASPDEAYTQYPHQAAPK).

Has a role in the perception of gravity. In Drosophila yakuba (Fruit fly), this protein is Protein alan shepard.